Reading from the N-terminus, the 660-residue chain is Leucine-rich repeat transmembrane protein FLRT2 (660 aa).

An N-terminal signal peptide occupies residues 1-35 (MGLQTAKWPSHGTFVLKFWLIMSLGLYSHVSKLLA). 2 disulfides stabilise this stretch: Cys36–Cys42 and Cys40–Cys49. The LRRNT domain occupies 36–67 (CPSVCRCDRNFVYCNERSLTSVPLGIPEGVTV). The Extracellular segment spans residues 36 to 540 (CPSVCRCDRN…QTTSHTMGSP (505 aa)). LRR repeat units follow at residues 62–87 (PEGV…LHNV), 88–108 (QSVH…MNLP), 109–131 (KNVR…ALAQ), 132–157 (LLKL…AFRE), 159–181 (ISLK…LPVD), 183–202 (QELR…AFQN), 203–228 (LTSL…TFSH), 229–251 (LTKL…DLPG), 252–274 (THLI…AFAN), and 275–298 (LRKL…VFDH). N-linked (GlcNAc...) asparagine glycosylation is present at Asn202. 2 cysteine pairs are disulfide-bonded: Cys314-Cys339 and Cys316-Cys360. The LRRCT domain maps to 338 to 361 (MCQGPEQVRGMAVRELNMNLLSCP). A compositionally biased stretch (low complexity) spans 372-396 (PAPSTVSPTTQSPTVSVPSPSRGSV). The segment at 372–413 (PAPSTVSPTTQSPTVSVPSPSRGSVPPAPAPSKLPTIPDWDG) is disordered. In terms of domain architecture, Fibronectin type-III spans 419–517 (PPISERIQLS…ICSEATTHAS (99 aa)). The chain crosses the membrane as a helical span at residues 541–561 (FLLAGLIGGAVIFVLVVLLSV). At 562–660 (FCWHMHKKGR…SVPDLEHCHT (99 aa)) the chain is on the cytoplasmic side.

In terms of assembly, self-associates (via leucine-rich repeats), giving rise to homooligomers. Interacts with FGFR1. Interacts with FGFR2. Interacts (via extracellular domain) with ADGRL1/LPHN1. Interacts (via extracellular domain) with ADGRL3 (via olfactomedin-like domain). Interacts (via extracellular domain) with UNC5D (via the first Ig-like domain). Can also interact (via extracellular domain) with UNC5B, but with much lower affinity. Interacts (via extracellular domain) with FN1. In terms of processing, N-glycosylated. Proteolytic cleavage in the juxtamembrane region gives rise to a soluble ectodomain. Cleavage is probably effected by a metalloprotease. As to expression, detected in brain (at protein level).

Its subcellular location is the cell membrane. It is found in the endoplasmic reticulum membrane. The protein localises to the synapse. It localises to the synaptosome. The protein resides in the cell junction. Its subcellular location is the focal adhesion. It is found in the secreted. The protein localises to the extracellular space. It localises to the extracellular matrix. The protein resides in the microsome membrane. In terms of biological role, functions in cell-cell adhesion, cell migration and axon guidance. Mediates cell-cell adhesion via its interactions with ADGRL3 and probably also other latrophilins that are expressed at the surface of adjacent cells. May play a role in the migration of cortical neurons during brain development via its interaction with UNC5D. Mediates axon growth cone collapse and plays a repulsive role in neuron guidance via its interaction with UNC5D, and possibly also other UNC-5 family members. Plays a role in fibroblast growth factor-mediated signaling cascades. Required for normal organization of the cardiac basement membrane during embryogenesis, and for normal embryonic epicardium and heart morphogenesis. This is Leucine-rich repeat transmembrane protein FLRT2 from Rattus norvegicus (Rat).